We begin with the raw amino-acid sequence, 251 residues long: Ubiquinone/menaquinone biosynthesis C-methyltransferase UbiE (251 aa).

Residues threonine 74, aspartate 95, 123-124, and serine 140 each bind S-adenosyl-L-methionine; that span reads NA.

It belongs to the class I-like SAM-binding methyltransferase superfamily. MenG/UbiE family.

It catalyses the reaction a 2-demethylmenaquinol + S-adenosyl-L-methionine = a menaquinol + S-adenosyl-L-homocysteine + H(+). It carries out the reaction a 2-methoxy-6-(all-trans-polyprenyl)benzene-1,4-diol + S-adenosyl-L-methionine = a 5-methoxy-2-methyl-3-(all-trans-polyprenyl)benzene-1,4-diol + S-adenosyl-L-homocysteine + H(+). It participates in quinol/quinone metabolism; menaquinone biosynthesis; menaquinol from 1,4-dihydroxy-2-naphthoate: step 2/2. The protein operates within cofactor biosynthesis; ubiquinone biosynthesis. Its function is as follows. Methyltransferase required for the conversion of demethylmenaquinol (DMKH2) to menaquinol (MKH2) and the conversion of 2-polyprenyl-6-methoxy-1,4-benzoquinol (DDMQH2) to 2-polyprenyl-3-methyl-6-methoxy-1,4-benzoquinol (DMQH2). This Salmonella arizonae (strain ATCC BAA-731 / CDC346-86 / RSK2980) protein is Ubiquinone/menaquinone biosynthesis C-methyltransferase UbiE.